The primary structure comprises 67 residues: DNA gyrase inhibitor YacG (67 aa).

The Zn(2+) site is built by cysteine 9, cysteine 12, cysteine 28, and cysteine 32. The tract at residues 46 to 67 (RIPSSGDLNDSDDWSEQPLDRQ) is disordered.

Belongs to the DNA gyrase inhibitor YacG family. Interacts with GyrB. Requires Zn(2+) as cofactor.

Inhibits all the catalytic activities of DNA gyrase by preventing its interaction with DNA. Acts by binding directly to the C-terminal domain of GyrB, which probably disrupts DNA binding by the gyrase. The chain is DNA gyrase inhibitor YacG from Erwinia tasmaniensis (strain DSM 17950 / CFBP 7177 / CIP 109463 / NCPPB 4357 / Et1/99).